We begin with the raw amino-acid sequence, 295 residues long: 4-hydroxy-tetrahydrodipicolinate synthase (295 aa).

Thr46 contributes to the pyruvate binding site. Tyr134 serves as the catalytic Proton donor/acceptor. Catalysis depends on Lys162, which acts as the Schiff-base intermediate with substrate. Ile205 lines the pyruvate pocket.

The protein belongs to the DapA family. As to quaternary structure, homotetramer; dimer of dimers.

Its subcellular location is the cytoplasm. It catalyses the reaction L-aspartate 4-semialdehyde + pyruvate = (2S,4S)-4-hydroxy-2,3,4,5-tetrahydrodipicolinate + H2O + H(+). The protein operates within amino-acid biosynthesis; L-lysine biosynthesis via DAP pathway; (S)-tetrahydrodipicolinate from L-aspartate: step 3/4. Its function is as follows. Catalyzes the condensation of (S)-aspartate-beta-semialdehyde [(S)-ASA] and pyruvate to 4-hydroxy-tetrahydrodipicolinate (HTPA). In Anaeromyxobacter sp. (strain K), this protein is 4-hydroxy-tetrahydrodipicolinate synthase.